The sequence spans 162 residues: uncharacterized protein (162 aa).

The tract at residues 1 to 23 is disordered; the sequence is MAQLPLSPAPQRPETKTPGKPEA. A compositionally biased stretch (basic and acidic residues) spans 13–23; sequence PETKTPGKPEA.

This is an uncharacterized protein from Rhodobacter capsulatus (Rhodopseudomonas capsulata).